Here is a 434-residue protein sequence, read N- to C-terminus: Oxysterol-binding protein homolog 5 (434 aa).

The tract at residues 18–371 (SSFNGDLSSL…KQVDYMNENT (354 aa)) is OSBP-related domain (ORD). Residue 24-29 (LSSLSA) participates in a 1,2-diacyl-sn-glycero-3-phospho-(1D-myo-inositol 4-phosphate) binding. Glutamine 96 provides a ligand contact to 20-hydroxycholesterol. Glutamine 96 is a binding site for 25-hydroxycholesterol. Residues glutamine 96 and arginine 100 each coordinate 7beta-hydroxycholesterol. Glutamine 96 contributes to the cholesterol binding site. Glutamine 96 is a binding site for ergosterol. Residues 109-112 (KPLN), 143-144 (HH), lysine 335, glutamate 339, and arginine 343 each bind a 1,2-diacyl-sn-glycero-3-phospho-(1D-myo-inositol 4-phosphate). A Phosphoserine modification is found at serine 389.

Belongs to the OSBP family.

The protein localises to the vacuole membrane. It is found in the bud neck. Lipid transport protein (LTP) involved in non-vesicular transfer of lipids between membranes. Functions in phosphoinositide-coupled directional transport of various lipids by carrying the lipid molecule in a hydrophobic pocket and transferring it between membranes through the cytosol. Involved in maintenance of intracellular sterol distribution and homeostasis. Plays a role in ergosterol synthesis. Binds and transports sterol. May be involved in ergosterol transport from the plasma membrane (PM) to the ER. This is Oxysterol-binding protein homolog 5 from Saccharomyces cerevisiae (strain ATCC 204508 / S288c) (Baker's yeast).